A 477-amino-acid chain; its full sequence is MQVTETLNEGLKREIKVVVPAKDLEAKLAERLETARDRAKINGFRPGKVPAAHLRKMYGKSFMAEIVNEILNDSSRSLLAERNEKSATQPEVIMSEDEKEAEQVLDGKADFVFSLNYEVLPAIEVKDFSKIAVTREVVDISDEEVDDQVKRIASSTRAFETKKGKAENEDRVTIDYLGKLDGEPFEGGADNDAQLVLGSGQFIPGFEEQLVGVKAGDEKVITVTFPAEYGAAHLAGKEATFDITVKEVAKPNELVLDDETAKKLGIESLERLRQVVREQIESQYGQITRQKVKRQILDALDGDYQFATPQKLVDAEFNNIWQQINFDLQQAGRTFEDEETTEEAAREEYRKLAERRVRLGLVLSEIGEKAGVEVSEEELQRAVYDQVRRYPGQEKEIYEFLRKTPDAVANLRAPIFEEKVVDHLLANISVTDKKVSKEELTAEDEDAASEAKPAKKAAPKKKAAPKKKADEGKSEEA.

A PPIase FKBP-type domain is found at 169–254 (EDRVTIDYLG…VKEVAKPNEL (86 aa)). The interval 435–477 (VSKEELTAEDEDAASEAKPAKKAAPKKKAAPKKKADEGKSEEA) is disordered. Positions 454-466 (AKKAAPKKKAAPK) are enriched in basic residues. Basic and acidic residues predominate over residues 467-477 (KKADEGKSEEA).

It belongs to the FKBP-type PPIase family. Tig subfamily.

Its subcellular location is the cytoplasm. It carries out the reaction [protein]-peptidylproline (omega=180) = [protein]-peptidylproline (omega=0). In terms of biological role, involved in protein export. Acts as a chaperone by maintaining the newly synthesized protein in an open conformation. Functions as a peptidyl-prolyl cis-trans isomerase. This is Trigger factor from Brucella anthropi (strain ATCC 49188 / DSM 6882 / CCUG 24695 / JCM 21032 / LMG 3331 / NBRC 15819 / NCTC 12168 / Alc 37) (Ochrobactrum anthropi).